We begin with the raw amino-acid sequence, 489 residues long: Rhamnulokinase (489 aa).

13-17 (ASSGR) provides a ligand contact to ATP. Cys68 and Cys222 form a disulfide bridge. Residues Gly83 and 236–238 (HDT) contribute to the substrate site. Asp237 acts as the Proton acceptor in catalysis. Thr259 serves as a coordination point for ATP. Asn296 serves as a coordination point for substrate. Gln304 contacts ATP. Cys353 and Cys370 form a disulfide bridge. Gly402 is a binding site for ATP. A disulfide bridge connects residues Cys413 and Cys417.

The protein belongs to the rhamnulokinase family. Mg(2+) is required as a cofactor.

It carries out the reaction L-rhamnulose + ATP = L-rhamnulose 1-phosphate + ADP + H(+). It participates in carbohydrate degradation; L-rhamnose degradation; glycerone phosphate from L-rhamnose: step 2/3. In terms of biological role, involved in the catabolism of L-rhamnose (6-deoxy-L-mannose). Catalyzes the transfer of the gamma-phosphate group from ATP to the 1-hydroxyl group of L-rhamnulose to yield L-rhamnulose 1-phosphate. This chain is Rhamnulokinase, found in Salmonella schwarzengrund (strain CVM19633).